The sequence spans 368 residues: 3-dehydroquinate synthase (368 aa).

NAD(+) is bound by residues D71–K76, G105–D109, T129–T130, K142, K151, and T169–T172. Residues E184, H247, and H264 each coordinate Zn(2+).

It belongs to the sugar phosphate cyclases superfamily. Dehydroquinate synthase family. It depends on Co(2+) as a cofactor. The cofactor is Zn(2+). NAD(+) serves as cofactor.

It localises to the cytoplasm. It catalyses the reaction 7-phospho-2-dehydro-3-deoxy-D-arabino-heptonate = 3-dehydroquinate + phosphate. It functions in the pathway metabolic intermediate biosynthesis; chorismate biosynthesis; chorismate from D-erythrose 4-phosphate and phosphoenolpyruvate: step 2/7. In terms of biological role, catalyzes the conversion of 3-deoxy-D-arabino-heptulosonate 7-phosphate (DAHP) to dehydroquinate (DHQ). This is 3-dehydroquinate synthase from Cupriavidus pinatubonensis (strain JMP 134 / LMG 1197) (Cupriavidus necator (strain JMP 134)).